The chain runs to 232 residues: Ribonuclease P protein component 3 (232 aa).

This sequence belongs to the eukaryotic/archaeal RNase P protein component 3 family. Consists of a catalytic RNA component and at least 4-5 protein subunits. Forms a subcomplex with Rnp2 which stimulates the catalytic RNA.

Its subcellular location is the cytoplasm. The enzyme catalyses Endonucleolytic cleavage of RNA, removing 5'-extranucleotides from tRNA precursor.. Its function is as follows. Part of ribonuclease P, a protein complex that generates mature tRNA molecules by cleaving their 5'-ends. This Methanocaldococcus jannaschii (strain ATCC 43067 / DSM 2661 / JAL-1 / JCM 10045 / NBRC 100440) (Methanococcus jannaschii) protein is Ribonuclease P protein component 3.